The primary structure comprises 170 residues: Sec-independent protein translocase protein TatB (170 aa).

A helical transmembrane segment spans residues 1–21 (MIDLGISKLALIGAVALIVIG).

Belongs to the TatB family. The Tat system comprises two distinct complexes: a TatABC complex, containing multiple copies of TatA, TatB and TatC subunits, and a separate TatA complex, containing only TatA subunits. Substrates initially bind to the TatABC complex, which probably triggers association of the separate TatA complex to form the active translocon.

The protein localises to the cell inner membrane. Its function is as follows. Part of the twin-arginine translocation (Tat) system that transports large folded proteins containing a characteristic twin-arginine motif in their signal peptide across membranes. Together with TatC, TatB is part of a receptor directly interacting with Tat signal peptides. TatB may form an oligomeric binding site that transiently accommodates folded Tat precursor proteins before their translocation. The chain is Sec-independent protein translocase protein TatB from Cupriavidus necator (strain ATCC 17699 / DSM 428 / KCTC 22496 / NCIMB 10442 / H16 / Stanier 337) (Ralstonia eutropha).